Reading from the N-terminus, the 245-residue chain is MIPKEQKEPVMAVPGDLAEPVPSLDLGKKLSVPQDLMIEELSLRNNRGSLLFQKRQRRVQKFTFELSESLQAILASSARGKVAGRAAQATVPNGLEEQNHHSETHVFQGSPGDPGITHLGAAGTGSVRSPSALAPGYAEPLKGVPPEKFNHTAIPKGYRCPWQEFTSYQDYSSGSRSHTPIPRDYRNFNKTPVPFGGPHVREAIFHAGTPFVPESFSGLELLRLRPNFNRVAQGWVRKLPESEEL.

At Ser-31 the chain carries Phosphoserine. The segment at 50 to 67 (LLFQKRQRRVQKFTFELS) is binding to ACTN2, PPP3CA and TCAP. The binding to FLNC stretch occupies residues 67 to 108 (SESLQAILASSARGKVAGRAAQATVPNGLEEQNHHSETHVFQ). Positions 93 to 134 (NGLEEQNHHSETHVFQGSPGDPGITHLGAAGTGSVRSPSALA) are disordered. Positions 180-201 (PIPRDYRNFNKTPVPFGGPHVR) are binding to ACTN2.

This sequence belongs to the myozenin family. As to quaternary structure, interacts with ACTN2, LDB3, FLNC, PPP3CA and TCAP. In terms of tissue distribution, expressed specifically in skeletal muscle and is enriched in fast-twitch muscle fibers. Not detected in heart.

Its subcellular location is the cytoplasm. The protein resides in the myofibril. The protein localises to the sarcomere. It is found in the z line. Its function is as follows. Myozenins may serve as intracellular binding proteins involved in linking Z line proteins such as alpha-actinin, gamma-filamin, TCAP/telethonin, LDB3/ZASP and localizing calcineurin signaling to the sarcomere. Plays an important role in the modulation of calcineurin signaling. May play a role in myofibrillogenesis. The protein is Myozenin-3 of Mus musculus (Mouse).